Here is a 469-residue protein sequence, read N- to C-terminus: Ribosomal protein uS12 methylthiotransferase RimO (469 aa).

The 117-residue stretch at 3 to 119 folds into the MTTase N-terminal domain; that stretch reads TRVYMHTLGC…VARIVSDAQA (117 aa). C12, C48, C82, C154, C158, and C161 together coordinate [4Fe-4S] cluster. In terms of domain architecture, Radical SAM core spans 140–370; sequence SLPSHTAYLK…MAVQQAISRA (231 aa). The TRAM domain occupies 373-441; it reads QAMIGRRVEV…EYDLVGRVVA (69 aa). Residues 444–469 form a disordered region; it reads PSRAARPLPAAPRAAPARKGGLNVLR. Over residues 447–461 the composition is skewed to low complexity; the sequence is AARPLPAAPRAAPAR.

The protein belongs to the methylthiotransferase family. RimO subfamily. Requires [4Fe-4S] cluster as cofactor.

It localises to the cytoplasm. It carries out the reaction L-aspartate(89)-[ribosomal protein uS12]-hydrogen + (sulfur carrier)-SH + AH2 + 2 S-adenosyl-L-methionine = 3-methylsulfanyl-L-aspartate(89)-[ribosomal protein uS12]-hydrogen + (sulfur carrier)-H + 5'-deoxyadenosine + L-methionine + A + S-adenosyl-L-homocysteine + 2 H(+). Catalyzes the methylthiolation of an aspartic acid residue of ribosomal protein uS12. This Anaeromyxobacter sp. (strain K) protein is Ribosomal protein uS12 methylthiotransferase RimO.